Reading from the N-terminus, the 334-residue chain is Lipoyl synthase (334 aa).

Residues 8-33 (LNNDTRPKVEAPARPRHPEKAHRPDT) form a disordered region. The segment covering 12–33 (TRPKVEAPARPRHPEKAHRPDT) has biased composition (basic and acidic residues). Residues cysteine 68, cysteine 73, cysteine 79, cysteine 94, cysteine 98, cysteine 101, and serine 307 each contribute to the [4Fe-4S] cluster site. In terms of domain architecture, Radical SAM core spans 80-296 (WEKRHATFMI…ETTAYAKGFL (217 aa)).

This sequence belongs to the radical SAM superfamily. Lipoyl synthase family. [4Fe-4S] cluster serves as cofactor.

The protein resides in the cytoplasm. It carries out the reaction [[Fe-S] cluster scaffold protein carrying a second [4Fe-4S](2+) cluster] + N(6)-octanoyl-L-lysyl-[protein] + 2 oxidized [2Fe-2S]-[ferredoxin] + 2 S-adenosyl-L-methionine + 4 H(+) = [[Fe-S] cluster scaffold protein] + N(6)-[(R)-dihydrolipoyl]-L-lysyl-[protein] + 4 Fe(3+) + 2 hydrogen sulfide + 2 5'-deoxyadenosine + 2 L-methionine + 2 reduced [2Fe-2S]-[ferredoxin]. It participates in protein modification; protein lipoylation via endogenous pathway; protein N(6)-(lipoyl)lysine from octanoyl-[acyl-carrier-protein]: step 2/2. Catalyzes the radical-mediated insertion of two sulfur atoms into the C-6 and C-8 positions of the octanoyl moiety bound to the lipoyl domains of lipoate-dependent enzymes, thereby converting the octanoylated domains into lipoylated derivatives. The chain is Lipoyl synthase from Methylorubrum populi (strain ATCC BAA-705 / NCIMB 13946 / BJ001) (Methylobacterium populi).